The chain runs to 902 residues: MTRLRSAASTITNRSTPALALTASHAGSHPAVIVPIQPLLLTLERRPSCPHRVSYPEIEAYRGISSSLRSHNAIVRASDIMAQIDPRDVGTPDEWVPRHPELIRLTGRHPFNSEPPLKYASTFITPMALHYVRNHGPVPRLEWDTHTFSIDGLVKKPRTFGMNELVTTFEQETVTFPVLLVCAGNRRKEQNMIKKTIGFSWGAAGCSTAEWTGVPLHVLLTACGVDREKAQWVWFEGIEDLPHDKYGTCIRASTELDPECDVLVAWKANGELLGPDHGFPVRLIVPGHIGGRMVKWLERIHVSDHESSNHHHIMDNRVLPSHVTAETATAEGWWSKSPYAIMELNVNAVVILPNHDDLLALGEDTTFNDIETYTIKGYAYSGGGRRVIRVEVTLDDGASWQLARIIYHERPSKYGKMWCWVHYELAAPMSSLLCAREVCVRAWDSSMNLMPAFPTWNVMGMMNNPWYRVKIHHEQDTNSLRFEHPTQAGNQKGGWMTKERIMTNDVDSIKMLQVEPLDTSSAATPKPGLTADELSELPLIFADEVAKHNSKKSCWFICRDLVYDATPFLDEHPGGATSILLCGGTDCTDEFESIHSTKAWQMLKKYCIGRCSSTEDDTGTSDTSSDHEETDVALKGRTKVPIVLISREVVSHDARIFKFALPAKDLRLGLPIGNHVFLYAKINGKTAVRAYTPISSENDEDRGFVSFLIKVYFAGDNPVHPEGGLFSQYLDGLHLGQQIQIKGPLGHFTYYGDGNFSLETTNFHAYKFGFVAGGTGITPVYQVMRAILEDAKDQTKVALIYCVRSQRDLLLRKELETLQKLRPGQCRIFYTLSDMELLDRNDPIVRGWAYGKSRLNFAMVKNIIGSDAEDVCMCGPEGMIEYACKPALLKLNYDLKTQTTVF.

Cys182 is a binding site for Mo-molybdopterin. The region spanning 537 to 612 (LPLIFADEVA…LKKYCIGRCS (76 aa)) is the Cytochrome b5 heme-binding domain. Residues His572 and His595 each coordinate heme. The FAD-binding FR-type domain maps to 637 to 751 (RTKVPIVLIS…KGPLGHFTYY (115 aa)). Residues 689–692 (RAYT), 708–712 (LIKVY), Phe713, 725–727 (LFS), and Thr778 each bind FAD. 872–879 (CMCGPEGM) serves as a coordination point for NADP(+).

Belongs to the nitrate reductase family. As to quaternary structure, homodimer. FAD is required as a cofactor. Heme serves as cofactor. It depends on Mo-molybdopterin as a cofactor.

The enzyme catalyses nitrite + NADP(+) + H2O = nitrate + NADPH + H(+). Functionally, nitrate reductase is a key enzyme involved in the first step of nitrate assimilation in plants, fungi and bacteria. The protein is Nitrate reductase [NADPH] (NIAA) of Phytophthora infestans (Potato late blight agent).